Consider the following 82-residue polypeptide: Small ribosomal subunit protein bS16 (82 aa).

Belongs to the bacterial ribosomal protein bS16 family.

The sequence is that of Small ribosomal subunit protein bS16 from Synechocystis sp. (strain ATCC 27184 / PCC 6803 / Kazusa).